The following is a 507-amino-acid chain: Xaa-Pro aminopeptidase 3 (507 aa).

A mitochondrion-targeting transit peptide spans 1–31 (MPWLLSAPKLVPAVANVRGLSGCMLCSQRRY). Positions 54 to 79 (HPHLLRPGEVTPGLSQVEYALRRHKL) are interaction with TNFRSF1B. The substrate site is built by Y300, D331, D342, H424, H431, E451, and E475. 3 residues coordinate Mn(2+): D331, D342, and H424. E451 and E475 together coordinate Mn(2+).

This sequence belongs to the peptidase M24B family. Homodimer. Isoform 1 interacts with TNFRSF1B/TNFR2 (activated) and TRAF2. It depends on Mn(2+) as a cofactor. In terms of tissue distribution, isoform 1 and isoform 2 are widely expressed, with isoform 1 being more abundant.

It localises to the mitochondrion. It is found in the cytoplasm. It catalyses the reaction Release of any N-terminal amino acid, including proline, that is linked to proline, even from a dipeptide or tripeptide.. Its function is as follows. Catalyzes the removal of a penultimate prolyl residue from the N-termini of peptides, such as Leu-Pro-Ala. Also shows low activity towards peptides with Ala or Ser at the P1 position. Functionally, promotes TNFRSF1B-mediated phosphorylation of MAPK8/JNK1 and MAPK9/JNK2, suggesting a function as an adapter protein for TNFRSF1B; the effect is independent of XPNPEP3 peptidase activity. May inhibit apoptotic cell death induced via TNF-TNFRSF1B signaling. This Homo sapiens (Human) protein is Xaa-Pro aminopeptidase 3 (XPNPEP3).